The sequence spans 356 residues: D-alanine--D-alanine ligase (356 aa).

The 206-residue stretch at 134–339 folds into the ATP-grasp domain; that stretch reads KQLFEHRGLP…YPELITKLIE (206 aa). Residue 167 to 222 coordinates ATP; that stretch reads NDKLNYPVFVKPANLGSSIGISKCSNEVELKEGIKEAFQFDRKLVIEQGVNAREIE. Residues D293, E306, and N308 each contribute to the Mg(2+) site.

The protein belongs to the D-alanine--D-alanine ligase family. Mg(2+) serves as cofactor. Requires Mn(2+) as cofactor.

The protein resides in the cytoplasm. It catalyses the reaction 2 D-alanine + ATP = D-alanyl-D-alanine + ADP + phosphate + H(+). It participates in cell wall biogenesis; peptidoglycan biosynthesis. Cell wall formation. This Staphylococcus aureus (strain MRSA252) protein is D-alanine--D-alanine ligase.